The chain runs to 514 residues: Lysine--tRNA ligase (514 aa).

The segment covering Met1–Gln13 has biased composition (low complexity). The disordered stretch occupies residues Met1–Asn21. Positions 422 and 429 each coordinate Mg(2+).

This sequence belongs to the class-II aminoacyl-tRNA synthetase family. Homodimer. Mg(2+) serves as cofactor.

Its subcellular location is the cytoplasm. The catalysed reaction is tRNA(Lys) + L-lysine + ATP = L-lysyl-tRNA(Lys) + AMP + diphosphate. This is Lysine--tRNA ligase from Psychrobacter cryohalolentis (strain ATCC BAA-1226 / DSM 17306 / VKM B-2378 / K5).